Reading from the N-terminus, the 252-residue chain is Small ribosomal subunit protein uS3 (252 aa).

The KH type-2 domain maps to 39-111; sequence IRKLINNFTK…DVNLNVLEVK (73 aa). The segment at 222–252 is disordered; sequence KPFASQSSNTPNRRPRNFKGGNNNHVNAKKN. A compositionally biased stretch (polar residues) spans 241 to 252; that stretch reads GGNNNHVNAKKN.

This sequence belongs to the universal ribosomal protein uS3 family. As to quaternary structure, part of the 30S ribosomal subunit. Forms a tight complex with proteins S10 and S14.

Functionally, binds the lower part of the 30S subunit head. Binds mRNA in the 70S ribosome, positioning it for translation. This is Small ribosomal subunit protein uS3 from Onion yellows phytoplasma (strain OY-M).